The sequence spans 671 residues: DNA ligase (671 aa).

Residues 38–42, 87–88, and glutamate 113 each bind NAD(+); these read DKEFD and SL. Lysine 115 functions as the N6-AMP-lysine intermediate in the catalytic mechanism. NAD(+) contacts are provided by arginine 136, glutamate 170, lysine 282, and lysine 306. Zn(2+) is bound by residues cysteine 396, cysteine 399, cysteine 414, and cysteine 419. Residues 586 to 671 form the BRCT domain; that stretch reads SDLQPFVGQS…LLKQEGIAID (86 aa).

The protein belongs to the NAD-dependent DNA ligase family. LigA subfamily. The cofactor is Mg(2+). Mn(2+) is required as a cofactor.

It carries out the reaction NAD(+) + (deoxyribonucleotide)n-3'-hydroxyl + 5'-phospho-(deoxyribonucleotide)m = (deoxyribonucleotide)n+m + AMP + beta-nicotinamide D-nucleotide.. DNA ligase that catalyzes the formation of phosphodiester linkages between 5'-phosphoryl and 3'-hydroxyl groups in double-stranded DNA using NAD as a coenzyme and as the energy source for the reaction. It is essential for DNA replication and repair of damaged DNA. The chain is DNA ligase from Leptospira biflexa serovar Patoc (strain Patoc 1 / Ames).